We begin with the raw amino-acid sequence, 558 residues long: Glutamine--tRNA ligase (558 aa).

A 'HIGH' region motif is present at residues 36 to 46 (PEPNGYLHIGH). ATP-binding positions include 37–39 (EPN) and 43–49 (HIGHAKS). 2 residues coordinate L-glutamine: D69 and Y214. Residues T233, 263–264 (RL), and 271–273 (LSK) contribute to the ATP site. The 'KMSKS' region motif lies at 270–274 (LLSKR).

The protein belongs to the class-I aminoacyl-tRNA synthetase family. Monomer.

The protein resides in the cytoplasm. The enzyme catalyses tRNA(Gln) + L-glutamine + ATP = L-glutaminyl-tRNA(Gln) + AMP + diphosphate. The sequence is that of Glutamine--tRNA ligase from Bradyrhizobium diazoefficiens (strain JCM 10833 / BCRC 13528 / IAM 13628 / NBRC 14792 / USDA 110).